The primary structure comprises 94 residues: Integration host factor subunit beta (94 aa).

It belongs to the bacterial histone-like protein family. Heterodimer of an alpha and a beta chain.

This protein is one of the two subunits of integration host factor, a specific DNA-binding protein that functions in genetic recombination as well as in transcriptional and translational control. The protein is Integration host factor subunit beta of Mannheimia succiniciproducens (strain KCTC 0769BP / MBEL55E).